A 669-amino-acid chain; its full sequence is Gametogenetin-binding protein 2 (669 aa).

Disordered stretches follow at residues glutamine 375–cysteine 421 and proline 452–glycine 475. Positions glutamate 376–lysine 388 are enriched in basic residues. A compositionally biased stretch (polar residues) spans glutamate 398–asparagine 408.

The protein localises to the cytoplasm. Functionally, may be involved in spermatogenesis. This Xenopus tropicalis (Western clawed frog) protein is Gametogenetin-binding protein 2 (ggnbp2).